Here is an 81-residue protein sequence, read N- to C-terminus: MRKLAIASIRVYQYAISPMMASHCRFYPSCSCYALEAIETHGLLRGGWLSLRRLGRCHPWNPGGYDPVPTHNTSNSSPMAE.

A disordered region spans residues 60 to 81; sequence WNPGGYDPVPTHNTSNSSPMAE. Polar residues predominate over residues 70–81; the sequence is THNTSNSSPMAE.

The protein belongs to the UPF0161 family.

Its subcellular location is the cell inner membrane. Could be involved in insertion of integral membrane proteins into the membrane. This Stutzerimonas stutzeri (strain A1501) (Pseudomonas stutzeri) protein is Putative membrane protein insertion efficiency factor.